Here is a 367-residue protein sequence, read N- to C-terminus: DNA replication and repair protein RecF (367 aa).

30–37 is an ATP binding site; sequence GANGSGKT.

Belongs to the RecF family.

The protein localises to the cytoplasm. In terms of biological role, the RecF protein is involved in DNA metabolism; it is required for DNA replication and normal SOS inducibility. RecF binds preferentially to single-stranded, linear DNA. It also seems to bind ATP. The chain is DNA replication and repair protein RecF from Pseudomonas syringae pv. tomato (strain ATCC BAA-871 / DC3000).